A 74-amino-acid polypeptide reads, in one-letter code: Kappa-scoloptoxin(07)-Ssm2c (74 aa).

Residues 1 to 19 form the signal peptide; the sequence is MLVFYAPLFVSIFSNTVMG. Residues 20 to 41 constitute a propeptide that is removed on maturation; it reads ATIDKPIPKPILREAIEKIAVN.

The protein belongs to the scoloptoxin-07 family. Post-translationally, contains 3 disulfide bonds. In terms of tissue distribution, expressed by the venom gland.

The protein localises to the secreted. Functionally, inhibits voltage-gated potassium channels. The polypeptide is Kappa-scoloptoxin(07)-Ssm2c (Scolopendra mutilans (Chinese red-headed centipede)).